The sequence spans 177 residues: Large ribosomal subunit protein uL6 (177 aa).

It belongs to the universal ribosomal protein uL6 family. In terms of assembly, part of the 50S ribosomal subunit.

Functionally, this protein binds to the 23S rRNA, and is important in its secondary structure. It is located near the subunit interface in the base of the L7/L12 stalk, and near the tRNA binding site of the peptidyltransferase center. This chain is Large ribosomal subunit protein uL6, found in Pseudomonas fluorescens (strain SBW25).